The primary structure comprises 624 residues: Alpha-galactosidase 3 (624 aa).

Positions methionine 1–glycine 22 are cleaved as a signal peptide. 5 N-linked (GlcNAc...) asparagine glycosylation sites follow: asparagine 37, asparagine 56, asparagine 197, asparagine 259, and asparagine 293. The active-site Nucleophile is the aspartate 347. Asparagine 393 carries an N-linked (GlcNAc...) asparagine glycan. The active-site Proton donor is aspartate 412. Residue asparagine 469 is glycosylated (N-linked (GlcNAc...) asparagine).

It belongs to the glycosyl hydrolase 27 family.

It localises to the secreted. The catalysed reaction is Hydrolysis of terminal, non-reducing alpha-D-galactose residues in alpha-D-galactosides, including galactose oligosaccharides, galactomannans and galactolipids.. Its function is as follows. Alpha-galactosidase involved in the degradation of simple oligosaccharides like melibiose, raffinose and stachyose, and of polymeric galacto(gluco)mannans. This is Alpha-galactosidase 3 (agl3) from Hypocrea jecorina (Trichoderma reesei).